The following is a 138-amino-acid chain: ATP synthase epsilon chain (138 aa).

This sequence belongs to the ATPase epsilon chain family. As to quaternary structure, F-type ATPases have 2 components, CF(1) - the catalytic core - and CF(0) - the membrane proton channel. CF(1) has five subunits: alpha(3), beta(3), gamma(1), delta(1), epsilon(1). CF(0) has three main subunits: a, b and c.

It localises to the cell membrane. Produces ATP from ADP in the presence of a proton gradient across the membrane. The protein is ATP synthase epsilon chain of Caldanaerobacter subterraneus subsp. tengcongensis (strain DSM 15242 / JCM 11007 / NBRC 100824 / MB4) (Thermoanaerobacter tengcongensis).